The primary structure comprises 95 residues: N(2)-fixation sustaining protein CowN (95 aa).

This sequence belongs to the CowN family.

Functionally, is required to sustain N(2)-dependent growth in the presence of low levels of carbon monoxide (CO). Probably acts by protecting the N(2) fixation ability of the nitrogenase complex, which is inactivated in the presence of CO. This Allochromatium vinosum (strain ATCC 17899 / DSM 180 / NBRC 103801 / NCIMB 10441 / D) (Chromatium vinosum) protein is N(2)-fixation sustaining protein CowN.